The chain runs to 668 residues: Metastasis-associated protein MTA2 (668 aa).

One can recognise a BAH domain in the interval 1–144 (MAANMYRVGD…PVQKTLLADQ (144 aa)). Phosphoserine occurs at positions 52 and 54. One can recognise an ELM2 domain in the interval 145–256 (GEIRVGCKFQ…KAMSTLVPQG (112 aa)). N6-acetyllysine is present on Lys-152. An SANT domain is found at 263–315 (DEMEEWSASEAMLFEEALEKYGKDFNDIRQDFLPWKSLASIVQFYYMWKTTDR). The GATA-type; atypical zinc-finger motif lies at 367–394 (CESCHTTQSAQWYAWGPPNMQCRLCASC). Residues 412–437 (GAARGTTEPHSRGHLSRPEAQSLSPY) form a disordered region. Phosphoserine is present on residues Ser-433 and Ser-435. An N6-acetyllysine modification is found at Lys-460. A Glycyl lysine isopeptide (Lys-Gly) (interchain with G-Cter in SUMO2 and SUMO3); alternate cross-link involves residue Lys-492. Lys-492 is covalently cross-linked (Glycyl lysine isopeptide (Lys-Gly) (interchain with G-Cter in SUMO2); alternate). Residue Lys-508 forms a Glycyl lysine isopeptide (Lys-Gly) (interchain with G-Cter in SUMO2) linkage. N6-acetyllysine occurs at positions 522 and 531. Residue Thr-534 is modified to Phosphothreonine. Glycyl lysine isopeptide (Lys-Gly) (interchain with G-Cter in SUMO2) cross-links involve residues Lys-559 and Lys-595. 2 disordered regions span residues 580-599 (ASGI…LNPA) and 647-668 (PPVP…VLED).

This sequence belongs to the metastasis-associated protein family. As to quaternary structure, component of the nucleosome remodeling and deacetylase (NuRD) repressor complex, composed of core proteins MTA1, MTA2, MTA3, RBBP4, RBBP7, HDAC1, HDAC2, MBD2, MBD3, and peripherally associated proteins CDK2AP1, CDK2AP2, GATAD2A, GATAD2B, CHD3, CHD4 and CHD5. The exact stoichiometry of the NuRD complex is unknown, and some subunits such as MBD2 and MBD3, GATAD2A and GATAD2B, and CHD3, CHD4 and CHD5 define mutually exclusive NuRD complexes. Interacts with CHD3. Interacts with CHD4. Interacts with GATAD2A. Interacts with HDAC7. Interacts with MBD3. Interacts with p53/TP53. Interacts with MINT. Interacts with PIMREG. Interacts with NACC2. Interacts with ERCC6. Interacts with PWWP2B. Interacts with transcription factor BCL11A.

The protein resides in the nucleus. May function as a transcriptional coregulator. Acts as a component of the histone deacetylase NuRD complex which participates in the remodeling of chromatin. This chain is Metastasis-associated protein MTA2 (Mta2), found in Mus musculus (Mouse).